An 811-amino-acid polypeptide reads, in one-letter code: Endothelin-converting enzyme 2 (811 aa).

Residues 1–106 are Cytoplasmic-facing; the sequence is MNVALQELGA…QLLGSRTQLE (106 aa). The interval 22 to 64 is disordered; the sequence is LRDEDAPETPVEGGASPDAMEVGKGASPFSPGPSPGMTPGTPR. A helical; Signal-anchor for type II membrane protein membrane pass occupies residues 107-127; the sequence is LVLAGASLLLAALLLGCLVAL. Over 128–811 the chain is Lumenal; the sequence is GVQYHRDPSH…MNPGQLCEVW (684 aa). The region spanning 139–811 is the Peptidase M13 domain; that stretch reads TCLTEACIRV…MNPGQLCEVW (673 aa). 5 disulfides stabilise this stretch: Cys-140–Cys-145, Cys-163–Cys-796, Cys-171–Cys-756, Cys-227–Cys-476, and Cys-685–Cys-808. Residues Asn-207, Asn-211, Asn-252, Asn-312, Asn-357, Asn-424, and Asn-580 are each glycosylated (N-linked (GlcNAc...) asparagine). Residue His-648 participates in Zn(2+) binding. The active site involves Glu-649. His-652 serves as a coordination point for Zn(2+). N-linked (GlcNAc...) asparagine glycans are attached at residues Asn-673 and Asn-681. Glu-708 contributes to the Zn(2+) binding site. The active-site Proton donor is Asp-712.

It belongs to the peptidase M13 family. The cofactor is Zn(2+).

It localises to the golgi apparatus membrane. It is found in the cytoplasmic vesicle. Its subcellular location is the secretory vesicle membrane. The enzyme catalyses Hydrolysis of the 21-Trp-|-Val-22 bond in big endothelin to form endothelin 1.. Converts big endothelin-1 to endothelin-1. Also involved in the processing of various neuroendocrine peptides, including neurotensin, angiotensin I, substance P, proenkephalin-derived peptides, and prodynorphin-derived peptides. May play a role in amyloid-beta processing. In Homo sapiens (Human), this protein is Endothelin-converting enzyme 2.